A 348-amino-acid chain; its full sequence is Casein kinase II subunit alpha (348 aa).

In terms of domain architecture, Protein kinase spans 55-340 (YEIVRKIGRG…PLEAMEHPFF (286 aa)). ATP contacts are provided by residues 61–69 (IGRGKFSEV) and Lys84. The active-site Proton acceptor is the Asp172.

This sequence belongs to the protein kinase superfamily. Ser/Thr protein kinase family. CK2 subfamily. In terms of assembly, tetramer of two alpha and two beta chains.

The protein localises to the cytoplasm. The enzyme catalyses L-seryl-[protein] + ATP = O-phospho-L-seryl-[protein] + ADP + H(+). The catalysed reaction is L-threonyl-[protein] + ATP = O-phospho-L-threonyl-[protein] + ADP + H(+). Functionally, casein kinases are operationally defined by their preferential utilization of acidic proteins such as caseins as substrates. The alpha chain contains the catalytic site. In Theileria annulata, this protein is Casein kinase II subunit alpha.